We begin with the raw amino-acid sequence, 341 residues long: tRNA N6-adenosine threonylcarbamoyltransferase (341 aa).

2 residues coordinate Fe cation: histidine 111 and histidine 115. Residues 134-138 (LVSGG), aspartate 167, glycine 180, and asparagine 276 each bind substrate. Aspartate 304 contacts Fe cation.

Belongs to the KAE1 / TsaD family. Requires Fe(2+) as cofactor.

The protein resides in the cytoplasm. The enzyme catalyses L-threonylcarbamoyladenylate + adenosine(37) in tRNA = N(6)-L-threonylcarbamoyladenosine(37) in tRNA + AMP + H(+). Its function is as follows. Required for the formation of a threonylcarbamoyl group on adenosine at position 37 (t(6)A37) in tRNAs that read codons beginning with adenine. Is involved in the transfer of the threonylcarbamoyl moiety of threonylcarbamoyl-AMP (TC-AMP) to the N6 group of A37, together with TsaE and TsaB. TsaD likely plays a direct catalytic role in this reaction. In Pseudomonas aeruginosa (strain LESB58), this protein is tRNA N6-adenosine threonylcarbamoyltransferase.